The following is a 210-amino-acid chain: Scoloptoxin SSD976 (210 aa).

The signal sequence occupies residues 1-23 (MNILLSSTLFVLLMFQIIGSGMG).

Post-translationally, contains 3 disulfide bonds. In terms of tissue distribution, expressed by the venom gland.

It localises to the secreted. Functionally, voltage-gated calcium channel inhibitor. This chain is Scoloptoxin SSD976, found in Scolopendra dehaani (Thai centipede).